The sequence spans 161 residues: MDQETVGNVVLLAIVTLISVVQNGFFAHKVEHESRTQNGRSFQRTGTLAFERVYTANQNCVDAYPTFLAVLWSAGLLCSQVPAAFAGLMYLLVRQKYFVGYLGERTQSTPGYIFGKRIILFLFLMSVAGIFNYYLIFFFGSDFENYIKTVTTTISPLLLIP.

Residues 1 to 8 (MDQETVGN) are Lumenal-facing. The helical transmembrane segment at 9–30 (VVLLAIVTLISVVQNGFFAHKV) threads the bilayer. Topologically, residues 31–52 (EHESRTQNGRSFQRTGTLAFER) are cytoplasmic. The helical transmembrane segment at 53-77 (VYTANQNCVDAYPTFLAVLWSAGLL) threads the bilayer. The Lumenal segment spans residues 78-80 (CSQ). Residues 81-102 (VPAAFAGLMYLLVRQKYFVGYL) traverse the membrane as a helical segment. Topologically, residues 103 to 107 (GERTQ) are cytoplasmic. An intramembrane segment occupies 108 to 115 (STPGYIFG). Residues 116–128 (KRIILFLFLMSVA) traverse the membrane as a helical segment. The Lumenal portion of the chain corresponds to 129-161 (GIFNYYLIFFFGSDFENYIKTVTTTISPLLLIP).

Belongs to the MAPEG family. In terms of assembly, homotrimer. Interacts with LTC4S and ALOX5.

It localises to the nucleus membrane. Its subcellular location is the endoplasmic reticulum membrane. Its function is as follows. Required for leukotriene biosynthesis by ALOX5 (5-lipoxygenase). Anchors ALOX5 to the membrane. Binds arachidonic acid, and could play an essential role in the transfer of arachidonic acid to ALOX5. Binds to MK-886, a compound that blocks the biosynthesis of leukotrienes. The sequence is that of Arachidonate 5-lipoxygenase-activating protein (ALOX5AP) from Macaca fascicularis (Crab-eating macaque).